The following is a 203-amino-acid chain: DNA-directed RNA polymerase subunit gamma (203 aa).

Residues cysteine 34, cysteine 36, cysteine 49, and cysteine 52 each contribute to the Zn(2+) site.

This sequence belongs to the RNA polymerase beta' chain family. RpoC1 subfamily. In terms of assembly, in cyanobacteria the RNAP catalytic core is composed of 2 alpha, 1 beta, 1 beta', 1 gamma and 1 omega subunit. When a sigma factor is associated with the core the holoenzyme is formed, which can initiate transcription. It depends on Zn(2+) as a cofactor.

The catalysed reaction is RNA(n) + a ribonucleoside 5'-triphosphate = RNA(n+1) + diphosphate. DNA-dependent RNA polymerase catalyzes the transcription of DNA into RNA using the four ribonucleoside triphosphates as substrates. This is DNA-directed RNA polymerase subunit gamma (rpoC1) from Prochloron sp.